A 182-amino-acid chain; its full sequence is Ribosome maturation factor RimM (182 aa).

The PRC barrel domain maps to 103–182; that stretch reads EGDYYWKDLM…SIEVDWDPGF (80 aa).

The protein belongs to the RimM family. Binds ribosomal protein uS19.

The protein resides in the cytoplasm. Its function is as follows. An accessory protein needed during the final step in the assembly of 30S ribosomal subunit, possibly for assembly of the head region. Essential for efficient processing of 16S rRNA. May be needed both before and after RbfA during the maturation of 16S rRNA. It has affinity for free ribosomal 30S subunits but not for 70S ribosomes. This chain is Ribosome maturation factor RimM, found in Escherichia coli O139:H28 (strain E24377A / ETEC).